The chain runs to 189 residues: Interferon alpha-14 (189 aa).

A signal peptide spans 1–23 (MALPFALMMALVVLSCKSSCSLG). 2 cysteine pairs are disulfide-bonded: cysteine 24–cysteine 122 and cysteine 52–cysteine 162. N-linked (GlcNAc...) asparagine glycosylation occurs at asparagine 95.

It belongs to the alpha/beta interferon family.

The protein resides in the secreted. Produced by macrophages, IFN-alpha have antiviral activities. Interferon stimulates the production of two enzymes: a protein kinase and an oligoadenylate synthetase. The polypeptide is Interferon alpha-14 (IFNA14) (Homo sapiens (Human)).